Reading from the N-terminus, the 142-residue chain is Large ribosomal subunit protein uL11 (142 aa).

This sequence belongs to the universal ribosomal protein uL11 family. In terms of assembly, part of the ribosomal stalk of the 50S ribosomal subunit. Interacts with L10 and the large rRNA to form the base of the stalk. L10 forms an elongated spine to which L12 dimers bind in a sequential fashion forming a multimeric L10(L12)X complex. In terms of processing, one or more lysine residues are methylated.

Forms part of the ribosomal stalk which helps the ribosome interact with GTP-bound translation factors. The chain is Large ribosomal subunit protein uL11 from Mycobacterium tuberculosis (strain ATCC 25177 / H37Ra).